A 425-amino-acid chain; its full sequence is Trigger factor (425 aa).

The PPIase FKBP-type domain maps to 163–248; sequence GDTAVIDFEG…VHEIKTKELP (86 aa).

This sequence belongs to the FKBP-type PPIase family. Tig subfamily.

It is found in the cytoplasm. It catalyses the reaction [protein]-peptidylproline (omega=180) = [protein]-peptidylproline (omega=0). Its function is as follows. Involved in protein export. Acts as a chaperone by maintaining the newly synthesized protein in an open conformation. Functions as a peptidyl-prolyl cis-trans isomerase. The chain is Trigger factor from Bacillus cereus (strain Q1).